The following is a 162-amino-acid chain: ATP-dependent Clp protease adapter protein CLPS1, chloroplastic (162 aa).

The transit peptide at Met1–Trp58 directs the protein to the chloroplast.

This sequence belongs to the ClpS family.

It localises to the plastid. The protein resides in the chloroplast stroma. Its function is as follows. Small adapter protein that modulate the activity of plastid Clp protease system (CLPC). Probably involved in substrate selection for plastid CLPC. This Chlamydomonas reinhardtii (Chlamydomonas smithii) protein is ATP-dependent Clp protease adapter protein CLPS1, chloroplastic.